The sequence spans 240 residues: MQIFPAIDLKNGQCVRLFQGDFSKKMIVNEDPIAQAKAFATGGATYLHIVDLDGALEGRPVNLEIIQKMKEAATVPVQVGGGIRSLAQVDYYLDSGIDRVIIGSAALTNPDFLHAAVQKYGPKIAVGIDAKNGYVATSGWLEVSQVNYLDLAKQMEKVGVETIIYTDISRDGTLTGPNLEQMAALQKHVNIHLIASGGVSSRADLEALSQLGLYGAIAGKALYNGHISMSDVTEVENHAY.

Catalysis depends on aspartate 8, which acts as the Proton acceptor. Aspartate 129 acts as the Proton donor in catalysis.

This sequence belongs to the HisA/HisF family.

Its subcellular location is the cytoplasm. It catalyses the reaction 1-(5-phospho-beta-D-ribosyl)-5-[(5-phospho-beta-D-ribosylamino)methylideneamino]imidazole-4-carboxamide = 5-[(5-phospho-1-deoxy-D-ribulos-1-ylimino)methylamino]-1-(5-phospho-beta-D-ribosyl)imidazole-4-carboxamide. Its pathway is amino-acid biosynthesis; L-histidine biosynthesis; L-histidine from 5-phospho-alpha-D-ribose 1-diphosphate: step 4/9. This chain is 1-(5-phosphoribosyl)-5-[(5-phosphoribosylamino)methylideneamino] imidazole-4-carboxamide isomerase, found in Listeria welshimeri serovar 6b (strain ATCC 35897 / DSM 20650 / CCUG 15529 / CIP 8149 / NCTC 11857 / SLCC 5334 / V8).